The sequence spans 351 residues: Uroporphyrinogen decarboxylase (351 aa).

Substrate contacts are provided by residues 25–29, aspartate 74, tyrosine 151, serine 206, and histidine 325; that span reads RQAGR.

Belongs to the uroporphyrinogen decarboxylase family. As to quaternary structure, homodimer.

The protein localises to the cytoplasm. It catalyses the reaction uroporphyrinogen III + 4 H(+) = coproporphyrinogen III + 4 CO2. It participates in porphyrin-containing compound metabolism; protoporphyrin-IX biosynthesis; coproporphyrinogen-III from 5-aminolevulinate: step 4/4. In terms of biological role, catalyzes the decarboxylation of four acetate groups of uroporphyrinogen-III to yield coproporphyrinogen-III. This Chlorobium phaeobacteroides (strain BS1) protein is Uroporphyrinogen decarboxylase.